The primary structure comprises 83 residues: Hainantoxin-III 7 (83 aa).

A signal peptide spans 1 to 21; that stretch reads MKASMFLALAGLVLLFVVGYA. Residues 22–48 constitute a propeptide that is removed on maturation; sequence SESEEKEFPRELLSKVFAVDDFKGEER. 3 disulfides stabilise this stretch: Cys50–Cys65, Cys57–Cys70, and Cys64–Cys77. Leu81 carries the post-translational modification Leucine amide.

Belongs to the neurotoxin 10 (Hwtx-1) family. 15 (Hntx-3) subfamily. As to quaternary structure, monomer. Expressed by the venom gland.

The protein resides in the secreted. In terms of biological role, selective antagonist of neuronal tetrodotoxin (TTX)-sensitive voltage-gated sodium channels (IC(50)=1270 nM on Nav1.1/SCN1A, 270 nM on Nav1.2/SCN2A, 491 nM on Nav1.3/SCN3A and 232 nM on Nav1.7/SCN9A). This toxin suppress Nav1.7 current amplitude without significantly altering the activation, inactivation, and repriming kinetics. Short extreme depolarizations partially activate the toxin-bound channel, indicating voltage-dependent inhibition of this toxin. This toxin increases the deactivation of the Nav1.7 current after extreme depolarizations. The toxin-Nav1.7 complex is gradually dissociated upon prolonged strong depolarizations in a voltage-dependent manner, and the unbound toxin rebinds to Nav1.7 after a long repolarization. Moreover, analysis of chimeric channels showed that the DIIS3-S4 linker is critical for toxin binding to Nav1.7. These data are consistent with this toxin interacting with Nav1.7 site 4 and trapping the domain II voltage sensor in the closed state. The polypeptide is Hainantoxin-III 7 (Cyriopagopus hainanus (Chinese bird spider)).